A 599-amino-acid polypeptide reads, in one-letter code: Nucleoporin p58/p45 (599 aa).

5 repeat units span residues 7-8 (FG), 30-31 (FG), 44-45 (FG), 63-64 (FG), and 68-69 (FG). The 14 X 2 AA repeats of F-G stretch occupies residues 7–579 (FGSGTLGSTT…VSNPASAGFG (573 aa)). A disordered region spans residues 213 to 247 (NEGLGGIDFSSSSDKKSDKTGTRPEDSKALKDENL). Positions 225 to 246 (SDKKSDKTGTRPEDSKALKDEN) are enriched in basic and acidic residues. Coiled-coil stretches lie at residues 256 to 276 (ENLQKFVKEQKQVQEEISRMS) and 314 to 381 (ETAQ…SHIT). Threonine 331 carries the phosphothreonine modification. Tandem repeats lie at residues 488-489 (FG), 492-493 (FG), 513-514 (FG), 519-520 (FG), 529-530 (FG), 531-532 (FG), 545-546 (FG), 568-569 (FG), and 578-579 (FG). The tract at residues 579–599 (GTGGQLLQLKKPPAGNKRGKR) is disordered.

This sequence belongs to the NUP58 family. In terms of assembly, component of the p62 complex, a complex at least composed of NUP62, NUP54, and NUP58. Interacts with NUTF2. Interacts with SRP1-alpha and Importin p97 proteins when they are together, but not with SRP1-alpha protein alone. Post-translationally, O-glycosylated.

It localises to the nucleus. Its subcellular location is the nuclear pore complex. The protein resides in the nucleus membrane. Functionally, component of the nuclear pore complex, a complex required for the trafficking across the nuclear membrane. In Homo sapiens (Human), this protein is Nucleoporin p58/p45.